Reading from the N-terminus, the 477-residue chain is Glutamate--tRNA ligase (477 aa).

A 'HIGH' region motif is present at residues 18-28 (PSPTGFIHLGN). Residues 128-138 (PRYDGSWRPEP) show a composition bias toward basic and acidic residues. Residues 128–151 (PRYDGSWRPEPGKTLPPVPAGMSP) form a disordered region. A 'KMSKS' region motif is present at residues 250-254 (KLSKR). Residue K253 participates in ATP binding.

Belongs to the class-I aminoacyl-tRNA synthetase family. Glutamate--tRNA ligase type 1 subfamily. Monomer.

The protein resides in the cytoplasm. The enzyme catalyses tRNA(Glu) + L-glutamate + ATP = L-glutamyl-tRNA(Glu) + AMP + diphosphate. In terms of biological role, catalyzes the attachment of glutamate to tRNA(Glu) in a two-step reaction: glutamate is first activated by ATP to form Glu-AMP and then transferred to the acceptor end of tRNA(Glu). The chain is Glutamate--tRNA ligase from Verminephrobacter eiseniae (strain EF01-2).